Reading from the N-terminus, the 107-residue chain is CLAVATA3/ESR (CLE)-related protein 10 (107 aa).

The N-terminal stretch at 1–23 is a signal peptide; the sequence is MKTNRNRPINILIVFFLLTTARA. Residues N27 and N30 are each glycosylated (N-linked (GlcNAc...) asparagine). The disordered stretch occupies residues 73–107; sequence SRQPLFSPPPPPTEIDQRYGVEKRLVPSGPNPLHN. A compositionally biased stretch (basic and acidic residues) spans 87–97; that stretch reads IDQRYGVEKRL. 2 positions are modified to hydroxyproline: P99 and P102. P102 is a glycosylation site (O-linked (Ara...) hydroxyproline).

This sequence belongs to the CLV3/ESR signal peptide family. The O-glycosylation (arabinosylation) of the hydroxyproline Pro-102 enhances binding affinity of the CLE10p peptide for its receptor. As to expression, expressed in stems, apex, leaves, flowers, siliques and pollen.

Its subcellular location is the secreted. The protein localises to the extracellular space. Its function is as follows. Extracellular signal peptide that regulates cell fate. Represses root apical meristem maintenance. Regulates the transition of protophloem cells from proliferation to differentiation, thus impinging on postembryonic growth capacity of the root meristem; this signaling pathway requires CRN and CLV2. This chain is CLAVATA3/ESR (CLE)-related protein 10, found in Arabidopsis thaliana (Mouse-ear cress).